Here is a 90-residue protein sequence, read N- to C-terminus: Small ribosomal subunit protein bS16 (90 aa).

The protein belongs to the bacterial ribosomal protein bS16 family. In terms of assembly, part of the 30S ribosomal subunit.

The chain is Small ribosomal subunit protein bS16 from Bacillus subtilis (strain 168).